Here is a 530-residue protein sequence, read N- to C-terminus: Light-independent protochlorophyllide reductase subunit B (530 aa).

Residue Asp-36 participates in [4Fe-4S] cluster binding. Asp-290 functions as the Proton donor in the catalytic mechanism. Gly-425 to Leu-426 contributes to the substrate binding site. Residues Leu-448–Ser-483 are disordered. Residues Thr-458 to Ser-473 show a composition bias toward polar residues.

The protein belongs to the ChlB/BchB/BchZ family. In terms of assembly, protochlorophyllide reductase is composed of three subunits; ChlL, ChlN and ChlB. Forms a heterotetramer of two ChlB and two ChlN subunits. [4Fe-4S] cluster is required as a cofactor.

It catalyses the reaction chlorophyllide a + oxidized 2[4Fe-4S]-[ferredoxin] + 2 ADP + 2 phosphate = protochlorophyllide a + reduced 2[4Fe-4S]-[ferredoxin] + 2 ATP + 2 H2O. It functions in the pathway porphyrin-containing compound metabolism; chlorophyll biosynthesis (light-independent). Its function is as follows. Component of the dark-operative protochlorophyllide reductase (DPOR) that uses Mg-ATP and reduced ferredoxin to reduce ring D of protochlorophyllide (Pchlide) to form chlorophyllide a (Chlide). This reaction is light-independent. The NB-protein (ChlN-ChlB) is the catalytic component of the complex. This Prochlorococcus marinus (strain SARG / CCMP1375 / SS120) protein is Light-independent protochlorophyllide reductase subunit B.